A 213-amino-acid polypeptide reads, in one-letter code: Protein-L-isoaspartate O-methyltransferase (213 aa).

Ser-61 is a catalytic residue.

Belongs to the methyltransferase superfamily. L-isoaspartyl/D-aspartyl protein methyltransferase family.

The protein localises to the cytoplasm. The catalysed reaction is [protein]-L-isoaspartate + S-adenosyl-L-methionine = [protein]-L-isoaspartate alpha-methyl ester + S-adenosyl-L-homocysteine. Its function is as follows. Catalyzes the methyl esterification of L-isoaspartyl residues in peptides and proteins that result from spontaneous decomposition of normal L-aspartyl and L-asparaginyl residues. It plays a role in the repair and/or degradation of damaged proteins. This is Protein-L-isoaspartate O-methyltransferase from Petrotoga mobilis (strain DSM 10674 / SJ95).